A 286-amino-acid polypeptide reads, in one-letter code: Bifunctional protein FolD (286 aa).

NADP(+) contacts are provided by residues 170-172 (GHS) and I236.

The protein belongs to the tetrahydrofolate dehydrogenase/cyclohydrolase family. Homodimer.

It catalyses the reaction (6R)-5,10-methylene-5,6,7,8-tetrahydrofolate + NADP(+) = (6R)-5,10-methenyltetrahydrofolate + NADPH. It carries out the reaction (6R)-5,10-methenyltetrahydrofolate + H2O = (6R)-10-formyltetrahydrofolate + H(+). Its pathway is one-carbon metabolism; tetrahydrofolate interconversion. Catalyzes the oxidation of 5,10-methylenetetrahydrofolate to 5,10-methenyltetrahydrofolate and then the hydrolysis of 5,10-methenyltetrahydrofolate to 10-formyltetrahydrofolate. The sequence is that of Bifunctional protein FolD from Methanococcoides burtonii (strain DSM 6242 / NBRC 107633 / OCM 468 / ACE-M).